The sequence spans 107 residues: Conantokin-R (107 aa).

An N-terminal signal peptide occupies residues 1-24 (MQLYTYLYLLVSLVTFYLILGTGT). Positions 25-80 (LGHGGALTERRSTDATALKPEPVLLQKSSARSTDDNGNDRLTQMKRILKKRGNKAR) are excised as a propeptide. The segment at 26 to 64 (GHGGALTERRSTDATALKPEPVLLQKSSARSTDDNGNDR) is disordered. Glu-83, Glu-84, Glu-91, and Glu-95 each carry 4-carboxyglutamate. A divalent metal cation contacts are provided by Glu-91 and Glu-95. Residues Cys-101 and Cys-105 are joined by a disulfide bond.

It belongs to the conotoxin B superfamily. The cofactor is Ca(2+). It depends on Mg(2+) as a cofactor. As to expression, expressed by the venom duct.

The protein resides in the secreted. In terms of biological role, conantokins inhibit N-methyl-D-aspartate (NMDA) receptors. This toxin is potent in the following order of preference: NR2B approximately NR2A/GRIN2A &gt; NR2C/GRIN2C &gt;&gt; NR2D/GRIN2D. Induces sleep-like symptoms in young mice. Is a highly potent anticonvulsant compound. The chain is Conantokin-R from Conus radiatus (Rayed cone).